A 169-amino-acid polypeptide reads, in one-letter code: Photosystem I assembly protein Ycf3 (169 aa).

TPR repeat units lie at residues 36–69 (AFTYYRDGMSAQSEGNYAEALQNYYEAMRLEIDP), 73–106 (SYILYNIGLIHTRNGEHTKALEYYFRALERNPFL), and 121–154 (GEQAIRQGDSEIAEAWFNQAAEYWKQAIALTPGN).

This sequence belongs to the Ycf3 family.

It localises to the plastid. Its subcellular location is the chloroplast thylakoid membrane. In terms of biological role, essential for the assembly of the photosystem I (PSI) complex. May act as a chaperone-like factor to guide the assembly of the PSI subunits. This is Photosystem I assembly protein Ycf3 from Cucumis sativus (Cucumber).